Here is a 972-residue protein sequence, read N- to C-terminus: Structural polyprotein (972 aa).

An a divalent metal cation-binding site is contributed by D26. Residues 509 to 734 enclose the Peptidase S50 domain; the sequence is SGSEAGSYSK…YLGQLMRTTA (226 aa). The active-site Nucleophile is the S633. Residue K674 is part of the active site. Disordered stretches follow at residues 797–817 and 917–972; these read STPPKHQEKPKGPDQHTAQEA and GGRG…DGEV. A compositionally biased stretch (basic and acidic residues) spans 801 to 817; it reads KHQEKPKGPDQHTAQEA.

Homotrimer. A central divalent metal (possibly cobalt) stabilizes the VP2 trimer. As to quaternary structure, homodimer. interacts (via C-terminus) with VP1 in the cytoplasm. Interacts with VP2. In terms of processing, specific enzymatic cleavages yield mature proteins. Capsid assembly seems to be regulated by polyprotein processing. The protease VP4 cleaves itself off the polyprotein, thus releasing pre-VP2 and VP3 within the infected cell. During capsid assembly, the C-terminus of pre-VP2 is further processed by VP4, giving rise to VP2, the external capsid protein and three small peptides that all stay closely associated with the capsid.

Its subcellular location is the virion. It localises to the host cytoplasm. In terms of biological role, capsid protein VP2 self assembles to form an icosahedral capsid with a T=13 symmetry, about 70 nm in diameter, and consisting of 260 VP2 trimers. The capsid encapsulates the genomic dsRNA. VP2 is also involved in attachment and entry into the host cell. The precursor of VP2 plays an important role in capsid assembly. First, pre-VP2 and VP2 oligomers assemble to form a procapsid. Then, the pre-VP2 intermediates may be processed into VP2 proteins by proteolytic cleavage mediated by VP4 to obtain the mature virion. The final capsid is composed of pentamers and hexamers but VP2 has a natural tendency to assemble into all-pentameric structures. Therefore pre-VP2 may be required to allow formation of the hexameric structures. Functionally, protease VP4 is a serine protease that cleaves the polyprotein into its final products. Pre-VP2 is first partially cleaved, and may be completely processed by VP4 upon capsid maturation. Its function is as follows. Capsid protein VP3 plays a key role in virion assembly by providing a scaffold for the capsid composed of VP2. May self-assemble to form a T=4-like icosahedral inner-capsid composed of at least 180 trimers. Plays a role in genomic RNA packaging by recruiting VP1 into the capsid and interacting with the dsRNA genome segments to form a ribonucleoprotein complex. Additionally, the interaction of the VP3 C-terminal tail with VP1 removes the inherent structural blockade of the polymerase active site. Thus, VP3 can also function as a transcriptional activator. In terms of biological role, structural peptide 1 is a small peptide derived from the C-terminus of pre-VP2. It destabilizes and perforates cell membranes, suggesting a role during viral entry. Structural peptide 2 is a small peptide derived from the C-terminus of pre-VP2. It is not essential for virus viability, but viral growth is affected when this protein is absent. Functionally, structural peptide 3 is a small peptide derived from pre-VP2 C-terminus. It is not essential for virus viability, but viral growth is affected when this protein is absent. The protein is Structural polyprotein of Oncorhynchus mykiss (Rainbow trout).